A 249-amino-acid polypeptide reads, in one-letter code: Uridylate kinase (249 aa).

Position 22–25 (22–25 (KISG)) interacts with ATP. Residues 30 to 35 (GTQGFG) form an involved in allosteric activation by GTP region. Glycine 64 provides a ligand contact to UMP. ATP is bound by residues glycine 65 and arginine 69. UMP-binding positions include aspartate 84 and 145 to 152 (TGNPYFTT). ATP contacts are provided by asparagine 173, tyrosine 179, and aspartate 182.

It belongs to the UMP kinase family. As to quaternary structure, homohexamer.

It is found in the cytoplasm. The catalysed reaction is UMP + ATP = UDP + ADP. The protein operates within pyrimidine metabolism; CTP biosynthesis via de novo pathway; UDP from UMP (UMPK route): step 1/1. Allosterically activated by GTP. Inhibited by UTP. Catalyzes the reversible phosphorylation of UMP to UDP. This Ruegeria sp. (strain TM1040) (Silicibacter sp.) protein is Uridylate kinase.